Here is a 219-residue protein sequence, read N- to C-terminus: MAMFYAHALGGYDENLHAFPGISSTVANDVRKYSVVSVYNNKYDIVKDKYMWCYSQVNKRYIGALLPMFECNEYLQIGDPIHDQEGNQISIITYRHKNYYALSGIGYESLDLCLEGVGIHHHVLETGNAVYGKVQHDYSTIKEKAKEMNALSPGPIIDYHVWIGDCICQVTAVDVHGKEIMRMRFKKGAVLPIPNLVKVKLGENDTENLSSTISAAPSR.

The active-site Proton donor is histidine 17. The Shared with catalytic histidine of dimeric partner role is filled by tyrosine 138. Lysine 142 serves as the catalytic Proton acceptor; shared with catalytic histidine of dimeric partner.

The protein belongs to the poxin family. Homodimer.

It catalyses the reaction 2',3'-cGAMP + H2O = Gp(2'-5')Ap(3') + H(+). Functionally, nuclease that is responsible for viral evasion of host cGAS-STING innate immunity. Cleaves 2',3'-cGAMP which is produced by host cGAS following recognition of cytosolic DNA and blocks the subsequent 2',3'-cGAMP-mediated activation of TMEM173/STING, which normally spreads to adjacent cells and activates the interferon and NF-kappa-B immune responses. The protein is Poxin (OPG188) of Bos taurus (Bovine).